A 351-amino-acid chain; its full sequence is Dysbindin (351 aa).

Residues 106–179 (FLADLECLTA…AELDAEHAQK (74 aa)) adopt a coiled-coil conformation. Residues 291–325 (RHKLSSLSSTCTDSASQEASEGESPVVQSDEEEVQ) form a disordered region. Over residues 295–306 (SSLSSTCTDSAS) the composition is skewed to low complexity.

Belongs to the dysbindin family. In terms of assembly, component of the biogenesis of lysosome-related organelles complex 1 (BLOC-1).

The protein localises to the cytoplasm. It localises to the cytoplasmic vesicle membrane. It is found in the cytoplasmic vesicle. Its subcellular location is the secretory vesicle. The protein resides in the synaptic vesicle membrane. The protein localises to the endosome membrane. It localises to the melanosome membrane. It is found in the nucleus. Its subcellular location is the postsynaptic density. The protein resides in the endoplasmic reticulum. In terms of biological role, component of the BLOC-1 complex, a complex that is required for normal biogenesis of lysosome-related organelles (LRO), such as platelet dense granules and melanosomes. Plays a role in intracellular vesicle trafficking. Plays a role in synaptic vesicle trafficking and in neurotransmitter release. May be required for normal dopamine homeostasis in the cerebral cortex, hippocampus, and hypothalamus. Plays a role in the regulation of cell surface exposure of DRD2. Contributes to the regulation of dopamine signaling. May play a role in actin cytoskeleton reorganization and neurite outgrowth. In Gallus gallus (Chicken), this protein is Dysbindin (DTNBP1).